A 201-amino-acid polypeptide reads, in one-letter code: Small ribosomal subunit protein uS4c (201 aa).

Positions 20-44 (GLTSKRPRAGSDLRNQSRSGKKSQY) are disordered. The region spanning 89-152 (MRLDNILFRL…NSRTLVQNLL (64 aa)) is the S4 RNA-binding domain.

It belongs to the universal ribosomal protein uS4 family. Part of the 30S ribosomal subunit. Contacts protein S5. The interaction surface between S4 and S5 is involved in control of translational fidelity.

It is found in the plastid. The protein resides in the chloroplast. Functionally, one of the primary rRNA binding proteins, it binds directly to 16S rRNA where it nucleates assembly of the body of the 30S subunit. Its function is as follows. With S5 and S12 plays an important role in translational accuracy. This chain is Small ribosomal subunit protein uS4c (rps4), found in Aethionema cordifolium (Lebanon stonecress).